Here is an 842-residue protein sequence, read N- to C-terminus: Synaptonemal complex protein 2-like (842 aa).

4 disordered regions span residues 451 to 473, 505 to 560, 619 to 666, and 715 to 738; these read GSLE…EPEQ, FARD…KQRV, STQK…SSLE, and EDAP…PGSV. Basic and acidic residues-rich tracts occupy residues 458–470 and 505–525; these read TEER…KQDE and FARD…HDLL. Residues 543-559 are compositionally biased toward basic residues; the sequence is NHKRKSLRTYSQRKKQR. Basic and acidic residues-rich tracts occupy residues 624–633 and 643–655; these read GLEKPERRGS and RVTD…EPRS.

Belongs to the SYCP2 family. As to expression, specifically expressed in oocytes.

The protein resides in the nucleus. Its subcellular location is the chromosome. It is found in the centromere. In terms of biological role, oocyte-specific protein that localizes to centromeres at the dictyate stage and regulates the survival of primordial oocytes. The protein is Synaptonemal complex protein 2-like of Mus musculus (Mouse).